Here is a 92-residue protein sequence, read N- to C-terminus: Cell division topological specificity factor (92 aa).

Belongs to the MinE family.

In terms of biological role, prevents the cell division inhibition by proteins MinC and MinD at internal division sites while permitting inhibition at polar sites. This ensures cell division at the proper site by restricting the formation of a division septum at the midpoint of the long axis of the cell. The sequence is that of Cell division topological specificity factor from Syntrophobacter fumaroxidans (strain DSM 10017 / MPOB).